The following is a 317-amino-acid chain: Ribosomal protein L11 methyltransferase (317 aa).

S-adenosyl-L-methionine-binding residues include Thr158, Gly179, Asp201, and Asn244.

It belongs to the methyltransferase superfamily. PrmA family.

It is found in the cytoplasm. It catalyses the reaction L-lysyl-[protein] + 3 S-adenosyl-L-methionine = N(6),N(6),N(6)-trimethyl-L-lysyl-[protein] + 3 S-adenosyl-L-homocysteine + 3 H(+). Its function is as follows. Methylates ribosomal protein L11. In Streptococcus pyogenes serotype M4 (strain MGAS10750), this protein is Ribosomal protein L11 methyltransferase.